The sequence spans 368 residues: Methylthioribose-1-phosphate isomerase (368 aa).

Substrate contacts are provided by residues 54-56 (RGA), Arg-91, and Gln-204. The active-site Proton donor is Asp-245. 255-256 (NK) provides a ligand contact to substrate.

Belongs to the eIF-2B alpha/beta/delta subunits family. MtnA subfamily.

It catalyses the reaction 5-(methylsulfanyl)-alpha-D-ribose 1-phosphate = 5-(methylsulfanyl)-D-ribulose 1-phosphate. It functions in the pathway amino-acid biosynthesis; L-methionine biosynthesis via salvage pathway; L-methionine from S-methyl-5-thio-alpha-D-ribose 1-phosphate: step 1/6. Functionally, catalyzes the interconversion of methylthioribose-1-phosphate (MTR-1-P) into methylthioribulose-1-phosphate (MTRu-1-P). In Gluconobacter oxydans (strain 621H) (Gluconobacter suboxydans), this protein is Methylthioribose-1-phosphate isomerase.